The primary structure comprises 258 residues: Peptidase inhibitor 15 (258 aa).

Positions 1–19 (MIAISAVSSALLFSLLCEA) are cleaved as a signal peptide. The propeptide occupies 20–60 (STVVLLNSTDSSPPTNNFTDIEAALKAQLDSADIPKARRKR). N-linked (GlcNAc...) asparagine glycans are attached at residues Asn26, Asn36, and Asn124. Residues 71-211 (LDYHNQVRGK…RRAVYLVCNY (141 aa)) form the SCP domain.

Belongs to the CRISP family. N-glycosylated. Weakly expressed. Expressed at low level in prostate, mammary gland, salivary gland and thyroid gland.

Its subcellular location is the secreted. In terms of biological role, serine protease inhibitor which displays weak inhibitory activity against trypsin. May play a role in facial patterning during embryonic development. This Homo sapiens (Human) protein is Peptidase inhibitor 15 (PI15).